Consider the following 1368-residue polypeptide: DNA-directed RNA polymerase subunit beta (1368 aa).

Belongs to the RNA polymerase beta chain family. In terms of assembly, the RNAP catalytic core consists of 2 alpha, 1 beta, 1 beta' and 1 omega subunit. When a sigma factor is associated with the core the holoenzyme is formed, which can initiate transcription.

The catalysed reaction is RNA(n) + a ribonucleoside 5'-triphosphate = RNA(n+1) + diphosphate. DNA-dependent RNA polymerase catalyzes the transcription of DNA into RNA using the four ribonucleoside triphosphates as substrates. The polypeptide is DNA-directed RNA polymerase subunit beta (Burkholderia cenocepacia (strain ATCC BAA-245 / DSM 16553 / LMG 16656 / NCTC 13227 / J2315 / CF5610) (Burkholderia cepacia (strain J2315))).